The primary structure comprises 399 residues: Elongation factor Tu (399 aa).

One can recognise a tr-type G domain in the interval Lys-10–Lys-209. The segment at Gly-19 to Thr-26 is G1. Residue Gly-19 to Thr-26 coordinates GTP. Thr-26 contacts Mg(2+). A G2 region spans residues Gly-60–Ala-64. The G3 stretch occupies residues Asp-81 to Gly-84. Residues Asp-81 to His-85 and Asn-136 to Asp-139 each bind GTP. The segment at Asn-136–Asp-139 is G4. Residues Ser-174–Leu-176 are G5.

This sequence belongs to the TRAFAC class translation factor GTPase superfamily. Classic translation factor GTPase family. EF-Tu/EF-1A subfamily. In terms of assembly, monomer.

Its subcellular location is the cytoplasm. The enzyme catalyses GTP + H2O = GDP + phosphate + H(+). Functionally, GTP hydrolase that promotes the GTP-dependent binding of aminoacyl-tRNA to the A-site of ribosomes during protein biosynthesis. The chain is Elongation factor Tu from Campylobacter hominis (strain ATCC BAA-381 / DSM 21671 / CCUG 45161 / LMG 19568 / NCTC 13146 / CH001A).